Here is a 239-residue protein sequence, read N- to C-terminus: Serine protease SplC (239 aa).

A signal peptide spans 1–36 (MNKNIVIKSMAALAILTSVTGINAAVVEETQQIANA). Active-site charge relay system residues include histidine 75, aspartate 113, and serine 193.

Belongs to the peptidase S1B family.

It localises to the secreted. This chain is Serine protease SplC (splC), found in Staphylococcus aureus (strain USA300 / TCH1516).